We begin with the raw amino-acid sequence, 118 residues long: Holo-[acyl-carrier-protein] synthase (118 aa).

Mg(2+) contacts are provided by aspartate 8 and glutamate 58.

It belongs to the P-Pant transferase superfamily. AcpS family. It depends on Mg(2+) as a cofactor.

It localises to the cytoplasm. It carries out the reaction apo-[ACP] + CoA = holo-[ACP] + adenosine 3',5'-bisphosphate + H(+). Transfers the 4'-phosphopantetheine moiety from coenzyme A to a Ser of acyl-carrier-protein. This is Holo-[acyl-carrier-protein] synthase from Streptococcus pyogenes serotype M1.